We begin with the raw amino-acid sequence, 623 residues long: Xaa-Pro aminopeptidase 1 (623 aa).

Arg77 is a binding site for a peptide. Lys304 carries the post-translational modification N6-acetyllysine. A peptide is bound at residue His395. Mn(2+) contacts are provided by Asp415, Asp426, and His489. The a peptide site is built by His489, His498, and Glu523. Mn(2+)-binding residues include Glu523 and Glu537.

The protein belongs to the peptidase M24B family. In terms of assembly, homodimer. The cofactor is Mn(2+). As to expression, expressed in all tissues tested, including liver, adrenal decapsular tissue, adrenal capsular tissue, corpus luteum, testis, submandibular gland, thymus, brain, cerebellum and heart. Highest levels in testis.

It is found in the cytoplasm. The enzyme catalyses Release of any N-terminal amino acid, including proline, that is linked to proline, even from a dipeptide or tripeptide.. Its activity is regulated as follows. Inhibited by inositol hexakisphosphate. In terms of biological role, metalloaminopeptidase that catalyzes the removal of a penultimate prolyl residue from the N-termini of peptides, such as Arg-Pro-Pro. Contributes to the degradation of bradykinin. The sequence is that of Xaa-Pro aminopeptidase 1 from Rattus norvegicus (Rat).